The following is a 299-amino-acid chain: Small ribosomal subunit protein uS2 (299 aa).

The segment at S227–E299 is disordered.

The protein belongs to the universal ribosomal protein uS2 family.

This chain is Small ribosomal subunit protein uS2, found in Christiangramia forsetii (strain DSM 17595 / CGMCC 1.15422 / KT0803) (Gramella forsetii).